The following is a 195-amino-acid chain: HTH-type transcriptional regulator BetI (195 aa).

In terms of domain architecture, HTH tetR-type spans 8–68 (EIRRAQLIDA…ATMRHVLRDL (61 aa)). Residues 31 to 50 (TLASVAQRASISTGIVSHYF) constitute a DNA-binding region (H-T-H motif).

The protein operates within amine and polyamine biosynthesis; betaine biosynthesis via choline pathway [regulation]. Repressor involved in the biosynthesis of the osmoprotectant glycine betaine. It represses transcription of the choline transporter BetT and the genes of BetAB involved in the synthesis of glycine betaine. The polypeptide is HTH-type transcriptional regulator BetI (Paraburkholderia xenovorans (strain LB400)).